Consider the following 227-residue polypeptide: MANINFGFEHHARKLYSGAIEQGITGSLVPMVIETSGRGERAFDIFSRLLRERIIFLGSGIDEHVAGLIMAQLIFLESEDPERDIYIYVNSPGGSVSAGLGIYDTMQYIRPDVSTVCVGMAASMGAFLLASGTKGKRASLPHSRIMIHQPSGGAQGQESDIIIQAREIEKIRRLLEEILASHTGKDVQQVREDSERDRWMNAQEALEYGIIDQIFEKRPKPDKEKES.

Serine 123 (nucleophile) is an active-site residue. Residue histidine 148 is part of the active site.

It belongs to the peptidase S14 family. In terms of assembly, fourteen ClpP subunits assemble into 2 heptameric rings which stack back to back to give a disk-like structure with a central cavity, resembling the structure of eukaryotic proteasomes.

The protein resides in the cytoplasm. The catalysed reaction is Hydrolysis of proteins to small peptides in the presence of ATP and magnesium. alpha-casein is the usual test substrate. In the absence of ATP, only oligopeptides shorter than five residues are hydrolyzed (such as succinyl-Leu-Tyr-|-NHMec, and Leu-Tyr-Leu-|-Tyr-Trp, in which cleavage of the -Tyr-|-Leu- and -Tyr-|-Trp bonds also occurs).. Functionally, cleaves peptides in various proteins in a process that requires ATP hydrolysis. Has a chymotrypsin-like activity. Plays a major role in the degradation of misfolded proteins. The polypeptide is ATP-dependent Clp protease proteolytic subunit (Chlorobium phaeobacteroides (strain DSM 266 / SMG 266 / 2430)).